Here is a 225-residue protein sequence, read N- to C-terminus: Uracil-DNA glycosylase (225 aa).

Catalysis depends on aspartate 65, which acts as the Proton acceptor.

The protein belongs to the uracil-DNA glycosylase (UDG) superfamily. UNG family.

It localises to the cytoplasm. It carries out the reaction Hydrolyzes single-stranded DNA or mismatched double-stranded DNA and polynucleotides, releasing free uracil.. Its function is as follows. Excises uracil residues from the DNA which can arise as a result of misincorporation of dUMP residues by DNA polymerase or due to deamination of cytosine. This Bacillus cereus (strain AH820) protein is Uracil-DNA glycosylase.